A 232-amino-acid polypeptide reads, in one-letter code: Small ribosomal subunit protein uS3 (232 aa).

In terms of domain architecture, KH type-2 spans 39 to 107 (IREILHKELK…DVVINIVEIR (69 aa)).

The protein belongs to the universal ribosomal protein uS3 family. In terms of assembly, part of the 30S ribosomal subunit. Forms a tight complex with proteins S10 and S14.

Functionally, binds the lower part of the 30S subunit head. Binds mRNA in the 70S ribosome, positioning it for translation. The polypeptide is Small ribosomal subunit protein uS3 (Rhodopseudomonas palustris (strain BisB18)).